A 158-amino-acid chain; its full sequence is UPF0145 protein Psyc_1853 (158 aa).

Positions Ile-113–Ser-122 are enriched in polar residues. A disordered region spans residues Ile-113–Glu-158.

The protein belongs to the UPF0145 family.

The protein is UPF0145 protein Psyc_1853 of Psychrobacter arcticus (strain DSM 17307 / VKM B-2377 / 273-4).